Here is a 304-residue protein sequence, read N- to C-terminus: Acetyl-coenzyme A carboxylase carboxyl transferase subunit beta (304 aa).

Positions 23 to 292 constitute a CoA carboxyltransferase N-terminal domain; that stretch reads VWTKCDSCGQ…PNPEAPREGV (270 aa). The Zn(2+) site is built by C27, C30, C46, and C49. The segment at 27-49 adopts a C4-type zinc-finger fold; the sequence is CDSCGQVLYRAELERNLEVCPKC. The segment at 284–304 is disordered; sequence NPEAPREGVVVPPVPDQEPEA. Residues 295-304 are compositionally biased toward pro residues; it reads PPVPDQEPEA.

This sequence belongs to the AccD/PCCB family. In terms of assembly, acetyl-CoA carboxylase is a heterohexamer composed of biotin carboxyl carrier protein (AccB), biotin carboxylase (AccC) and two subunits each of ACCase subunit alpha (AccA) and ACCase subunit beta (AccD). Requires Zn(2+) as cofactor.

Its subcellular location is the cytoplasm. The catalysed reaction is N(6)-carboxybiotinyl-L-lysyl-[protein] + acetyl-CoA = N(6)-biotinyl-L-lysyl-[protein] + malonyl-CoA. The protein operates within lipid metabolism; malonyl-CoA biosynthesis; malonyl-CoA from acetyl-CoA: step 1/1. Its function is as follows. Component of the acetyl coenzyme A carboxylase (ACC) complex. Biotin carboxylase (BC) catalyzes the carboxylation of biotin on its carrier protein (BCCP) and then the CO(2) group is transferred by the transcarboxylase to acetyl-CoA to form malonyl-CoA. In Escherichia coli O6:K15:H31 (strain 536 / UPEC), this protein is Acetyl-coenzyme A carboxylase carboxyl transferase subunit beta.